Consider the following 150-residue polypeptide: Ribonuclease pancreatic delta-type (150 aa).

The N-terminal stretch at Met-1–Gly-25 is a signal peptide. A substrate-binding site is contributed by Arg-35. The active-site Proton acceptor is His-37. 4 disulfide bridges follow: Cys-51-Cys-110, Cys-65-Cys-121, Cys-83-Cys-136, and Cys-90-Cys-98. Residues Lys-66 to Thr-70 and Lys-91 contribute to the substrate site. His-145 acts as the Proton donor in catalysis.

Belongs to the pancreatic ribonuclease family. Monomer.

It localises to the secreted. The catalysed reaction is an [RNA] containing cytidine + H2O = an [RNA]-3'-cytidine-3'-phosphate + a 5'-hydroxy-ribonucleotide-3'-[RNA].. The enzyme catalyses an [RNA] containing uridine + H2O = an [RNA]-3'-uridine-3'-phosphate + a 5'-hydroxy-ribonucleotide-3'-[RNA].. Its function is as follows. Endonuclease that catalyzes the cleavage of RNA on the 3' side of pyrimidine nucleotides. Acts on single-stranded and double-stranded RNA. The protein is Ribonuclease pancreatic delta-type of Rattus tiomanicus (Malayan field rat).